An 874-amino-acid chain; its full sequence is Translation initiation factor IF-2 (874 aa).

Residues 1–262 are disordered; sequence MEDKNKTIKE…EKSTSDRDFS (262 aa). The span at 54-63 shows a compositional bias: pro residues; the sequence is SKPPVMPLPL. Residues 83–104 show a composition bias toward basic and acidic residues; it reads AKREESPGKQDAGRPPRDKDTR. Positions 141-222 are enriched in gly residues; it reads SGGGYQGNRG…NRGPRSGGTG (82 aa). The segment covering 235–244 has biased composition (polar residues); it reads LSQSRGSSVT. Residues 250-262 show a composition bias toward basic and acidic residues; it reads HDKEKSTSDRDFS. Residues 369–538 form the tr-type G domain; the sequence is NRPPVVTIMG…LLQAEVMDLK (170 aa). A G1 region spans residues 378–385; sequence GHVDHGKT. A GTP-binding site is contributed by 378–385; sequence GHVDHGKT. Residues 403-407 are G2; that stretch reads GITQH. Residues 424–427 are G3; sequence DTPG. GTP contacts are provided by residues 424-428 and 478-481; these read DTPGH and NKID. The tract at residues 478–481 is G4; it reads NKID. The segment at 514–516 is G5; it reads SAR.

Belongs to the TRAFAC class translation factor GTPase superfamily. Classic translation factor GTPase family. IF-2 subfamily.

The protein resides in the cytoplasm. Functionally, one of the essential components for the initiation of protein synthesis. Protects formylmethionyl-tRNA from spontaneous hydrolysis and promotes its binding to the 30S ribosomal subunits. Also involved in the hydrolysis of GTP during the formation of the 70S ribosomal complex. The chain is Translation initiation factor IF-2 from Leptospira interrogans serogroup Icterohaemorrhagiae serovar copenhageni (strain Fiocruz L1-130).